Consider the following 439-residue polypeptide: Methylenetetrahydrofolate--tRNA-(uracil-5-)-methyltransferase TrmFO (439 aa).

8–13 (GAGLAG) contacts FAD.

This sequence belongs to the MnmG family. TrmFO subfamily. It depends on FAD as a cofactor.

It is found in the cytoplasm. It carries out the reaction uridine(54) in tRNA + (6R)-5,10-methylene-5,6,7,8-tetrahydrofolate + NADH + H(+) = 5-methyluridine(54) in tRNA + (6S)-5,6,7,8-tetrahydrofolate + NAD(+). The enzyme catalyses uridine(54) in tRNA + (6R)-5,10-methylene-5,6,7,8-tetrahydrofolate + NADPH + H(+) = 5-methyluridine(54) in tRNA + (6S)-5,6,7,8-tetrahydrofolate + NADP(+). Its function is as follows. Catalyzes the folate-dependent formation of 5-methyl-uridine at position 54 (M-5-U54) in all tRNAs. This Lacticaseibacillus paracasei (strain ATCC 334 / BCRC 17002 / CCUG 31169 / CIP 107868 / KCTC 3260 / NRRL B-441) (Lactobacillus paracasei) protein is Methylenetetrahydrofolate--tRNA-(uracil-5-)-methyltransferase TrmFO.